The primary structure comprises 481 residues: Cysteine--tRNA ligase (481 aa).

Zn(2+) is bound at residue C43. Positions 45-55 match the 'HIGH' region motif; it reads ATVQGLPHIGH. Residues C221, H246, and E250 each contribute to the Zn(2+) site. The short motif at 277–281 is the 'KMSKS' region element; the sequence is KMSKS. K280 provides a ligand contact to ATP.

It belongs to the class-I aminoacyl-tRNA synthetase family. Monomer. The cofactor is Zn(2+).

It is found in the cytoplasm. The enzyme catalyses tRNA(Cys) + L-cysteine + ATP = L-cysteinyl-tRNA(Cys) + AMP + diphosphate. This Mycobacterium sp. (strain JLS) protein is Cysteine--tRNA ligase.